Consider the following 102-residue polypeptide: Small ribosomal subunit protein uS10 (102 aa).

Belongs to the universal ribosomal protein uS10 family. In terms of assembly, part of the 30S ribosomal subunit.

Involved in the binding of tRNA to the ribosomes. This is Small ribosomal subunit protein uS10 from Rhodospirillum centenum (strain ATCC 51521 / SW).